The following is a 1222-amino-acid chain: PAN2-PAN3 deadenylation complex catalytic subunit PAN2 (1222 aa).

WD repeat units follow at residues 104-143 (PEMT…IVDQ) and 276-315 (ANVA…HFNE). The interval 316 to 451 (IGKETEFSDI…GLKINGETKE (136 aa)) is linker. Residues 452–821 (DPLLKYSNVE…SPCTLAYQIS (370 aa)) form the USP domain. In terms of domain architecture, Exonuclease spans 871-1027 (ALDTEFVDLE…WAVFKEYIQE (157 aa)). A divalent metal cation contacts are provided by Asp-873, Glu-875, and Asp-982. The disordered stretch occupies residues 1035 to 1067 (TSITTTTNPNIHDANTSTTTTTAITTTPPEGHD). Residues 1050–1061 (TSTTTTTAITTT) show a composition bias toward low complexity. Asp-1071 provides a ligand contact to a divalent metal cation. Disordered stretches follow at residues 1110–1152 (PARY…LSGR) and 1167–1222 (ASVT…SPMR). Over residues 1119 to 1133 (PNPNNNNINNGVNPN) the composition is skewed to low complexity. Polar residues predominate over residues 1134 to 1144 (GLSTPGSTNPI). Positions 1180 to 1191 (NGSMSGSTPSTP) are enriched in low complexity. Over residues 1207–1216 (SFGGAKGLTF) the composition is skewed to gly residues.

The protein belongs to the peptidase C19 family. PAN2 subfamily. Forms a heterotrimer with an asymmetric homodimer of the regulatory subunit PAN3 to form the poly(A)-nuclease (PAN) deadenylation complex. The cofactor is a divalent metal cation.

Its subcellular location is the cytoplasm. The enzyme catalyses Exonucleolytic cleavage of poly(A) to 5'-AMP.. Its activity is regulated as follows. Positively regulated by the regulatory subunit PAN3. Functionally, catalytic subunit of the poly(A)-nuclease (PAN) deadenylation complex, one of two cytoplasmic mRNA deadenylases involved in mRNA turnover. PAN specifically shortens poly(A) tails of RNA and the activity is stimulated by poly(A)-binding protein PAB1. PAN deadenylation is followed by rapid degradation of the shortened mRNA tails by the CCR4-NOT complex. Deadenylated mRNAs are then degraded by two alternative mechanisms, namely exosome-mediated 3'-5' exonucleolytic degradation, or deadenylation-dependent mRNA decaping and subsequent 5'-3' exonucleolytic degradation by XRN1. May also be involved in post-transcriptional maturation of mRNA poly(A) tails. The polypeptide is PAN2-PAN3 deadenylation complex catalytic subunit PAN2 (Coccidioides immitis (strain RS) (Valley fever fungus)).